Consider the following 117-residue polypeptide: Eukaryotic translation initiation factor 4E-binding protein 1 (117 aa).

Composition is skewed to polar residues over residues 1–12 and 33–47; these read MSAGSSCSQTPS and YSTT…TTPG. The segment at 1–47 is disordered; the sequence is MSAGSSCSQTPSRAIPTRRVALGDGVQLPPGDYSTTPGGTLFSTTPG. An N-acetylserine modification is found at serine 2. Threonine 36 and threonine 40 each carry phosphothreonine. Phosphoserine is present on serine 43. Phosphothreonine; by MTOR is present on threonine 45. A Phosphothreonine modification is found at threonine 49. Tyrosine 53 is modified (phosphotyrosine). The short motif at 53–59 is the YXXXXLphi motif element; the sequence is YDRKFLM. A Glycyl lysine isopeptide (Lys-Gly) (interchain with G-Cter in ubiquitin) cross-link involves residue lysine 56. A Phosphoserine; by DYRK2, MAPK1, MAPK3 and MTOR modification is found at serine 64. Residues 64 to 117 are disordered; that stretch reads SPVAKTPPKDLPTIPGVTSPTSDEPPMQASQSHLHSSPEDKRAGGEESQFEMDI. Position 69 is a phosphothreonine; by MTOR (threonine 69). The residue at position 76 (threonine 76) is a Phosphothreonine. Positions 79–98 are enriched in polar residues; sequence GVTSPTSDEPPMQASQSHLH. A phosphoserine mark is found at serine 82, serine 95, and serine 99. Residues 99 to 108 show a composition bias toward basic and acidic residues; it reads SSPEDKRAGG. Phosphoserine; by DYRK2 is present on serine 100. Serine 111 carries the post-translational modification Phosphoserine. The TOS motif motif lies at 113-117; that stretch reads FEMDI.

This sequence belongs to the eIF4E-binding protein family. Hypophosphorylated EIF4EBP1 competes with EIF4G1/EIF4G3 to interact with EIF4E; insulin stimulated MAP-kinase (MAPK1 and MAPK3) or mTORC1 phosphorylation of EIF4EBP1 causes dissociation of the complex allowing EIF4G1/EIF4G3 to bind and consequent initiation of translation. Interacts (via TOS motif) with RPTOR; promoting phosphorylation by mTORC1. Phosphorylated on serine and threonine residues in response to insulin, EGF and PDGF. Phosphorylation at Thr-36, Thr-45, Ser-64 and Thr-69, corresponding to the hyperphosphorylated form, is regulated by mTORC1 and abolishes binding to EIF4E. In terms of processing, ubiquitinated: when eIF4E levels are low, hypophosphorylated form is ubiquitinated by the BCR(KLHL25) complex, leading to its degradation and serving as a homeostatic mechanism to maintain translation and prevent eIF4E inhibition when eIF4E levels are low. Not ubiquitinated when hyperphosphorylated (at Thr-36, Thr-45, Ser-64 and Thr-69) or associated with eIF4E. Expressed in all tissues examined; highest levels in fat and skeletal tissue, lowest levels in kidney.

The protein localises to the cytoplasm. The protein resides in the nucleus. Its function is as follows. Repressor of translation initiation that regulates EIF4E activity by preventing its assembly into the eIF4F complex: hypophosphorylated form competes with EIF4G1/EIF4G3 and strongly binds to EIF4E, leading to repress translation. In contrast, hyperphosphorylated form dissociates from EIF4E, allowing interaction between EIF4G1/EIF4G3 and EIF4E, leading to initiation of translation. Mediates the regulation of protein translation by hormones, growth factors and other stimuli that signal through the MAP kinase and mTORC1 pathways. In Rattus norvegicus (Rat), this protein is Eukaryotic translation initiation factor 4E-binding protein 1 (Eif4ebp1).